The primary structure comprises 1272 residues: uncharacterized protein (1272 aa).

Coiled coils occupy residues 185 to 212 (IEFL…EAVN), 246 to 274 (KNSA…YLDA), and 607 to 640 (ALGK…NTVI). The interval 1179–1231 (ELPETSQQPVVPTPPATRPSSPIPPESDILTEEEQLEEQPPRQQQATRKTTTT) is disordered. The segment covering 1189 to 1203 (VPTPPATRPSSPIPP) has biased composition (pro residues). Positions 1219–1231 (PRQQQATRKTTTT) are enriched in low complexity.

This is an uncharacterized protein from Magallana gigas (Pacific oyster).